Consider the following 147-residue polypeptide: Mediator of RNA polymerase II transcription subunit 10 (147 aa).

This sequence belongs to the Mediator complex subunit 10 family. Component of the Mediator complex.

The protein localises to the nucleus. Functionally, component of the Mediator complex, a coactivator involved in the regulated transcription of nearly all RNA polymerase II-dependent genes. Mediator functions as a bridge to convey information from gene-specific regulatory proteins to the basal RNA polymerase II transcription machinery. Mediator is recruited to promoters by direct interactions with regulatory proteins and serves as a scaffold for the assembly of a functional preinitiation complex with RNA polymerase II and the general transcription factors. This chain is Mediator of RNA polymerase II transcription subunit 10 (NUT2), found in Debaryomyces hansenii (strain ATCC 36239 / CBS 767 / BCRC 21394 / JCM 1990 / NBRC 0083 / IGC 2968) (Yeast).